The sequence spans 220 residues: ATP-dependent dethiobiotin synthetase BioD (220 aa).

13 to 18 (EVGKTV) is an ATP binding site. Residue Thr-17 participates in Mg(2+) binding. Residue Lys-38 is part of the active site. A substrate-binding site is contributed by Ser-42. ATP is bound by residues Asp-55, 116–119 (EGAG), 176–177 (NR), and Asn-212. Mg(2+)-binding residues include Asp-55 and Glu-116.

The protein belongs to the dethiobiotin synthetase family. As to quaternary structure, homodimer. It depends on Mg(2+) as a cofactor.

It is found in the cytoplasm. It catalyses the reaction (7R,8S)-7,8-diammoniononanoate + CO2 + ATP = (4R,5S)-dethiobiotin + ADP + phosphate + 3 H(+). It functions in the pathway cofactor biosynthesis; biotin biosynthesis; biotin from 7,8-diaminononanoate: step 1/2. Catalyzes a mechanistically unusual reaction, the ATP-dependent insertion of CO2 between the N7 and N8 nitrogen atoms of 7,8-diaminopelargonic acid (DAPA, also called 7,8-diammoniononanoate) to form a ureido ring. This Photobacterium profundum (strain SS9) protein is ATP-dependent dethiobiotin synthetase BioD.